Consider the following 163-residue polypeptide: Nucleotide-binding protein CJJ81176_0398 (163 aa).

The protein belongs to the YajQ family.

Nucleotide-binding protein. The polypeptide is Nucleotide-binding protein CJJ81176_0398 (Campylobacter jejuni subsp. jejuni serotype O:23/36 (strain 81-176)).